An 84-amino-acid polypeptide reads, in one-letter code: Large ribosomal subunit protein bL27 (84 aa).

Residues 1-22 are disordered; it reads MAHKKGGGSTKNGRDSNPKYLG.

Belongs to the bacterial ribosomal protein bL27 family.

The polypeptide is Large ribosomal subunit protein bL27 (Prosthecochloris aestuarii (strain DSM 271 / SK 413)).